Reading from the N-terminus, the 505-residue chain is Glucose-6-phosphate 1-dehydrogenase (505 aa).

Position 2 is an N-acetylserine (S2). NADP(+) contacts are provided by residues 18 to 25 and R52; that span reads GASGDLAK. S142 is subject to Phosphoserine. Residue Y145 is modified to Phosphotyrosine. Position 157 (K157) interacts with NADP(+). D-glucose 6-phosphate contacts are provided by residues K157, 187–191, E225, and D244; that span reads HYLGK. Catalysis depends on H249, which acts as the Proton acceptor. Residue R340 coordinates NADP(+). K343 contacts D-glucose 6-phosphate. NADP(+) contacts are provided by K349, R353, and R375. Q377 serves as a coordination point for D-glucose 6-phosphate. Residues 383 to 385 and R470 each bind NADP(+); that span reads YLK.

The protein belongs to the glucose-6-phosphate dehydrogenase family.

It carries out the reaction D-glucose 6-phosphate + NADP(+) = 6-phospho-D-glucono-1,5-lactone + NADPH + H(+). It participates in carbohydrate degradation; pentose phosphate pathway; D-ribulose 5-phosphate from D-glucose 6-phosphate (oxidative stage): step 1/3. Its function is as follows. Catalyzes the rate-limiting step of the oxidative pentose-phosphate pathway, which represents a route for the dissimilation of carbohydrates besides glycolysis. The main function of this enzyme is to provide reducing power (NADPH) and pentose phosphates for fatty acid and nucleic acid synthesis. The chain is Glucose-6-phosphate 1-dehydrogenase (ZWF1) from Saccharomyces cerevisiae (strain ATCC 204508 / S288c) (Baker's yeast).